The chain runs to 529 residues: Bifunctional purine biosynthesis protein PurH (529 aa).

Residues Met-1–Val-148 form the MGS-like domain.

This sequence belongs to the PurH family.

It catalyses the reaction (6R)-10-formyltetrahydrofolate + 5-amino-1-(5-phospho-beta-D-ribosyl)imidazole-4-carboxamide = 5-formamido-1-(5-phospho-D-ribosyl)imidazole-4-carboxamide + (6S)-5,6,7,8-tetrahydrofolate. It carries out the reaction IMP + H2O = 5-formamido-1-(5-phospho-D-ribosyl)imidazole-4-carboxamide. It functions in the pathway purine metabolism; IMP biosynthesis via de novo pathway; 5-formamido-1-(5-phospho-D-ribosyl)imidazole-4-carboxamide from 5-amino-1-(5-phospho-D-ribosyl)imidazole-4-carboxamide (10-formyl THF route): step 1/1. It participates in purine metabolism; IMP biosynthesis via de novo pathway; IMP from 5-formamido-1-(5-phospho-D-ribosyl)imidazole-4-carboxamide: step 1/1. This chain is Bifunctional purine biosynthesis protein PurH, found in Pectobacterium atrosepticum (strain SCRI 1043 / ATCC BAA-672) (Erwinia carotovora subsp. atroseptica).